A 495-amino-acid chain; its full sequence is DDB1- and CUL4-associated factor 4 (495 aa).

Residues 1–17 (MNKSRWQSRRRHGRRSH) show a composition bias toward basic residues. Residues 1-66 (MNKSRWQSRR…TAGTSSVPEL (66 aa)) form a disordered region. The segment covering 24–34 (RLRDSEDRSDS) has biased composition (basic and acidic residues). The segment covering 51–62 (PSTSSGTAGTSS) has biased composition (low complexity). 2 WD repeats span residues 368 to 407 (FHDSAVTSVRILQDEQYLMASDMAGKIKLWDLRTTKCVRQ) and 410 to 451 (GHVN…LLRT).

In terms of assembly, interacts with DDB1 and CUL4A.

It participates in protein modification; protein ubiquitination. In terms of biological role, may function as a substrate receptor for CUL4-DDB1 E3 ubiquitin-protein ligase complex. The protein is DDB1- and CUL4-associated factor 4 (DCAF4) of Homo sapiens (Human).